The following is a 323-amino-acid chain: Beta-ketoacyl-[acyl-carrier-protein] synthase III (323 aa).

Residues C113 and H250 contribute to the active site. The ACP-binding stretch occupies residues 251 to 255 (QANRR). N280 is a catalytic residue.

The protein belongs to the thiolase-like superfamily. FabH family. As to quaternary structure, homodimer.

It is found in the cytoplasm. The enzyme catalyses malonyl-[ACP] + acetyl-CoA + H(+) = 3-oxobutanoyl-[ACP] + CO2 + CoA. The protein operates within lipid metabolism; fatty acid biosynthesis. Functionally, catalyzes the condensation reaction of fatty acid synthesis by the addition to an acyl acceptor of two carbons from malonyl-ACP. Catalyzes the first condensation reaction which initiates fatty acid synthesis and may therefore play a role in governing the total rate of fatty acid production. Possesses both acetoacetyl-ACP synthase and acetyl transacylase activities. Its substrate specificity determines the biosynthesis of branched-chain and/or straight-chain of fatty acids. The chain is Beta-ketoacyl-[acyl-carrier-protein] synthase III from Sinorhizobium medicae (strain WSM419) (Ensifer medicae).